The primary structure comprises 46 residues: Replication-associated protein (46 aa).

Its function is as follows. Seems to play a role in virus replication. The protein is Replication-associated protein of Solanum tuberosum (Potato).